The chain runs to 109 residues: ATP-dependent Clp protease adapter protein ClpS (109 aa).

Residues methionine 1–valine 21 form a disordered region.

It belongs to the ClpS family. Binds to the N-terminal domain of the chaperone ClpA.

Involved in the modulation of the specificity of the ClpAP-mediated ATP-dependent protein degradation. This chain is ATP-dependent Clp protease adapter protein ClpS, found in Caulobacter sp. (strain K31).